Consider the following 339-residue polypeptide: GTP 3',8-cyclase (339 aa).

Residues 13–249 (RYGRPLRDLR…GEVAQRHAFA (237 aa)) form the Radical SAM core domain. Arginine 22 is a GTP binding site. [4Fe-4S] cluster is bound by residues cysteine 29 and cysteine 33. An S-adenosyl-L-methionine-binding site is contributed by tyrosine 35. Cysteine 36 is a binding site for [4Fe-4S] cluster. Position 75 (arginine 75) interacts with GTP. Glycine 79 contacts S-adenosyl-L-methionine. Threonine 106 contacts GTP. Position 130 (serine 130) interacts with S-adenosyl-L-methionine. Position 168 (lysine 168) interacts with GTP. Position 202 (methionine 202) interacts with S-adenosyl-L-methionine. Positions 266 and 269 each coordinate [4Fe-4S] cluster. 271–273 (RAR) serves as a coordination point for GTP. Position 283 (cysteine 283) interacts with [4Fe-4S] cluster.

It belongs to the radical SAM superfamily. MoaA family. As to quaternary structure, monomer and homodimer. Requires [4Fe-4S] cluster as cofactor.

The catalysed reaction is GTP + AH2 + S-adenosyl-L-methionine = (8S)-3',8-cyclo-7,8-dihydroguanosine 5'-triphosphate + 5'-deoxyadenosine + L-methionine + A + H(+). It participates in cofactor biosynthesis; molybdopterin biosynthesis. Functionally, catalyzes the cyclization of GTP to (8S)-3',8-cyclo-7,8-dihydroguanosine 5'-triphosphate. The chain is GTP 3',8-cyclase from Xanthomonas campestris pv. campestris (strain B100).